A 297-amino-acid chain; its full sequence is Vacuolar protein sorting-associated protein 26C (297 aa).

It belongs to the VPS26 family. Component of the commander complex that is essential for endosomal recycling of transmembrane cargos; the commander complex is composed of the CCC subcomplex and the retriever subcomplex. Component of the heterotrimeric retriever complex consisting of VPS26C, VPS29 and VPS35L; within the complex interacts with VPS35L. Interacts with SNX17 (via C-terminus); the interaction is direct and associates SNX17 with the retriever complex. Interacts with SNX31; the interaction is direct.

Its subcellular location is the endosome. Functionally, component of the commander complex that is essential for endosomal recycling of transmembrane cargos; the commander complex is composed of the CCC subcomplex and the retriever subcomplex. Component of the retriever complex, which is a heterotrimeric complex related to retromer cargo-selective complex (CSC) and essential for retromer-independent retrieval and recycling of numerous cargos such as integrin alpha-5/beta-1 (ITGA5:ITGB1). The recruitment of the retriever complex to the endosomal membrane involves CCC and WASH complexes. In the endosomes, drives the retriever and recycling of NxxY-motif-containing cargo proteins by coupling to SNX17, a cargo essential for the homeostatic maintenance of numerous cell surface proteins associated with processes that include cell migration, cell adhesion, nutrient supply and cell signaling. The polypeptide is Vacuolar protein sorting-associated protein 26C (Mus musculus (Mouse)).